The following is a 1316-amino-acid chain: DNA-directed RNA polymerase subunit beta' (1316 aa).

The Zn(2+) site is built by C60, C62, C75, and C78. Mg(2+) is bound by residues D535, D537, and D539. Zn(2+) is bound by residues C891, C968, C975, and C978.

Belongs to the RNA polymerase beta' chain family. As to quaternary structure, the RNAP catalytic core consists of 2 alpha, 1 beta, 1 beta' and 1 omega subunit. When a sigma factor is associated with the core the holoenzyme is formed, which can initiate transcription. The cofactor is Mg(2+). It depends on Zn(2+) as a cofactor.

It catalyses the reaction RNA(n) + a ribonucleoside 5'-triphosphate = RNA(n+1) + diphosphate. In terms of biological role, DNA-dependent RNA polymerase catalyzes the transcription of DNA into RNA using the four ribonucleoside triphosphates as substrates. In Mycobacterium marinum (strain ATCC BAA-535 / M), this protein is DNA-directed RNA polymerase subunit beta'.